Consider the following 549-residue polypeptide: Oxygen-dependent choline dehydrogenase (549 aa).

4-33 is an FAD binding site; the sequence is DFVIIGSGSAGSAMAYRLSEDGRYSVIVIE. Residue histidine 465 is the Proton acceptor of the active site.

Belongs to the GMC oxidoreductase family. The cofactor is FAD.

It catalyses the reaction choline + A = betaine aldehyde + AH2. The catalysed reaction is betaine aldehyde + NAD(+) + H2O = glycine betaine + NADH + 2 H(+). It participates in amine and polyamine biosynthesis; betaine biosynthesis via choline pathway; betaine aldehyde from choline (cytochrome c reductase route): step 1/1. In terms of biological role, involved in the biosynthesis of the osmoprotectant glycine betaine. Catalyzes the oxidation of choline to betaine aldehyde and betaine aldehyde to glycine betaine at the same rate. In Brucella canis (strain ATCC 23365 / NCTC 10854 / RM-666), this protein is Oxygen-dependent choline dehydrogenase.